The primary structure comprises 205 residues: Urease accessory protein UreG (205 aa).

G14–T21 contacts GTP.

It belongs to the SIMIBI class G3E GTPase family. UreG subfamily. Homodimer. UreD, UreF and UreG form a complex that acts as a GTP-hydrolysis-dependent molecular chaperone, activating the urease apoprotein by helping to assemble the nickel containing metallocenter of UreC. The UreE protein probably delivers the nickel.

Its subcellular location is the cytoplasm. In terms of biological role, facilitates the functional incorporation of the urease nickel metallocenter. This process requires GTP hydrolysis, probably effectuated by UreG. In Enterobacter sp. (strain 638), this protein is Urease accessory protein UreG.